An 807-amino-acid polypeptide reads, in one-letter code: Spondin-1 (807 aa).

The N-terminal stretch at 1–28 is a signal peptide; sequence MRLSPAPLKLSRTPALLALALPLAAALA. The 166-residue stretch at 29-194 folds into the Reelin domain; the sequence is FSDETLDKVP…DSTFDGVTDK (166 aa). 17 disulfide bridges follow: C44/C128, C156/C182, C199/C336, C200/C340, C202/C415, C443/C480, C454/C489, C459/C494, C502/C538, C513/C517, C548/C554, C559/C595, C570/C574, C605/C610, C615/C650, C626/C630, and C660/C665. In terms of domain architecture, Spondin spans 195 to 388; that stretch reads PILDCCACGT…LTSLDHPQSP (194 aa). N214 is a glycosylation site (N-linked (GlcNAc...) asparagine). 3 residues coordinate Ca(2+): D325, D354, and D358. 6 TSP type-1 domains span residues 442–495, 501–555, 558–611, 614–666, 668–721, and 754–806; these read TCIY…PGCS, TCTM…EECS, SCLM…PECH, PCLL…PECP, DCEL…RKCL, and GCRM…NVHP. W448 carries C-linked (Man) tryptophan glycosylation. A C-linked (Man) tryptophan; partial glycan is attached at W451. A glycan (C-linked (Man) tryptophan) is linked at W507. W510 is a glycosylation site (C-linked (Man) tryptophan; partial). C-linked (Man) tryptophan glycosylation is present at W564. A C-linked (Man) tryptophan; partial glycan is attached at W620. W623 carries a C-linked (Man) tryptophan glycan. C-linked (Man) tryptophan glycosylation is present at W674. A glycan (N-linked (GlcNAc...) asparagine) is linked at N681.

As to quaternary structure, binds to the central extracellular domain of APP and inhibits beta-secretase cleavage of APP. In terms of tissue distribution, highest expression in lung, lower expression in brain, heart, kidney, liver and testis, and lowest expression in pancreas, skeletal muscle and ovary. Not expressed in spleen.

Its subcellular location is the secreted. The protein resides in the extracellular space. It localises to the extracellular matrix. Its function is as follows. Cell adhesion protein that promotes the attachment of spinal cord and sensory neuron cells and the outgrowth of neurites in vitro. May contribute to the growth and guidance of axons in both the spinal cord and the PNS. Major factor for vascular smooth muscle cell. This is Spondin-1 (SPON1) from Homo sapiens (Human).